The sequence spans 429 residues: Adenylosuccinate synthetase (429 aa).

GTP is bound by residues 12-18 and 40-42; these read GDEGKGK and GHT. The active-site Proton acceptor is Asp-13. The Mg(2+) site is built by Asp-13 and Gly-40. Residues 13-16, 38-41, Thr-128, Arg-142, Gln-223, Thr-238, and Arg-302 contribute to the IMP site; these read DEGK and NAGH. The active-site Proton donor is His-41. 298 to 304 provides a ligand contact to substrate; it reads VNTGRPR. GTP-binding positions include Arg-304, 330 to 332, and 412 to 414; these read KLD and GVG.

The protein belongs to the adenylosuccinate synthetase family. As to quaternary structure, homodimer. It depends on Mg(2+) as a cofactor.

The protein resides in the cytoplasm. It catalyses the reaction IMP + L-aspartate + GTP = N(6)-(1,2-dicarboxyethyl)-AMP + GDP + phosphate + 2 H(+). It participates in purine metabolism; AMP biosynthesis via de novo pathway; AMP from IMP: step 1/2. Plays an important role in the de novo pathway of purine nucleotide biosynthesis. Catalyzes the first committed step in the biosynthesis of AMP from IMP. In Corynebacterium urealyticum (strain ATCC 43042 / DSM 7109), this protein is Adenylosuccinate synthetase.